The following is a 646-amino-acid chain: uncharacterized protein (646 aa).

8 consecutive transmembrane segments (helical) span residues 20-42 (ILSR…LYLL), 55-77 (FLAG…IHQV), 97-115 (LLHF…HYML), 127-149 (YTFD…FSYW), 159-181 (IAFV…FFKL), 188-206 (ILLG…LLLA), 216-238 (YGAV…YHLF), and 251-273 (WVTM…IGTA).

It is found in the cell membrane. This is an uncharacterized protein from Bacillus subtilis (strain 168).